A 411-amino-acid chain; its full sequence is MGSCSPQLPLICLSDQTLKPGSSKWVKVRSDVRKALEDYGCFEAKIDQVSMELQGSVLKAMQELFALPTEAKQRNVCPKPFTGYLSHNGLSESFGIKDANILEKAHEFTQQLWPEGNKSISKMIQLYAEKLAELDMMVRRLILESYGIEYFIDEHLNSTYYRMRLMKYIARPDNDITAAVGANVDNGANDNADGDANVNDDGASIGVKVNVDVGDDVNDNDSVNIGVGVDINVETNVNGDLDAEANGDATAWVVGAVSGNASVGAKEANVDAELGLPSHTDKSLTGIIYQHQIDGLEVKTKEGKWIRVKPAPNTVIVIAGDALCALMNGRIPSPYHRVRVTEKKKTRYAAALFSNPKEGYIIDSPKELVDEKHPRAFKPFDFVDLFNFYHTEAGRRAPSTLQAFCGVSAGK.

A Fe2OG dioxygenase domain is found at 259 to 356 (GNASVGAKEA…RYAAALFSNP (98 aa)). Residues histidine 279, aspartate 281, and histidine 336 each contribute to the Fe cation site. Arginine 347 contacts 2-oxoglutarate.

Belongs to the iron/ascorbate-dependent oxidoreductase family. Requires Fe(2+) as cofactor. As to expression, not expressed.

In terms of biological role, 2-oxoglutarate-dependent dioxygenase involved in glucosinolates biosynthesis. Catalyzes the conversion of methylsulfinylalkyl glucosinolates to hydroxyalkyl glucosinolates. The protein is 2-oxoglutarate-dependent dioxygenase AOP3 (AOP3) of Arabidopsis thaliana (Mouse-ear cress).